The sequence spans 420 residues: Tyrosine--tRNA ligase (420 aa).

Residue Y38 coordinates L-tyrosine. The 'HIGH' region motif lies at 43–52 (PTGDSLHIGH). Residues Y169 and Q173 each coordinate L-tyrosine. The short motif at 231-235 (KFGKS) is the 'KMSKS' region element. K234 is an ATP binding site. An S4 RNA-binding domain is found at 353-419 (KNIVDFLVDT…GKRKYTLVTI (67 aa)).

This sequence belongs to the class-I aminoacyl-tRNA synthetase family. TyrS type 1 subfamily. As to quaternary structure, homodimer.

It localises to the cytoplasm. It catalyses the reaction tRNA(Tyr) + L-tyrosine + ATP = L-tyrosyl-tRNA(Tyr) + AMP + diphosphate + H(+). Functionally, catalyzes the attachment of tyrosine to tRNA(Tyr) in a two-step reaction: tyrosine is first activated by ATP to form Tyr-AMP and then transferred to the acceptor end of tRNA(Tyr). The polypeptide is Tyrosine--tRNA ligase (Lactobacillus acidophilus (strain ATCC 700396 / NCK56 / N2 / NCFM)).